The primary structure comprises 705 residues: Ion-translocating oxidoreductase complex subunit C (705 aa).

4Fe-4S ferredoxin-type domains are found at residues 368–397 (MGETPEEQGCIRCSACADACPADLLPQQLY) and 407–435 (KATAHNIADCIECGACAWVCPSSIPLVQY). [4Fe-4S] cluster is bound by residues Cys-377, Cys-380, Cys-383, Cys-387, Cys-416, Cys-419, Cys-422, and Cys-426. A disordered region spans residues 536-684 (RARQAENIPA…EPVDPRKAAV (149 aa)).

Belongs to the 4Fe4S bacterial-type ferredoxin family. RnfC subfamily. As to quaternary structure, the complex is composed of six subunits: RnfA, RnfB, RnfC, RnfD, RnfE and RnfG. [4Fe-4S] cluster is required as a cofactor.

The protein resides in the cell inner membrane. Its function is as follows. Part of a membrane-bound complex that couples electron transfer with translocation of ions across the membrane. The sequence is that of Ion-translocating oxidoreductase complex subunit C from Citrobacter koseri (strain ATCC BAA-895 / CDC 4225-83 / SGSC4696).